The sequence spans 124 residues: MNLIKQFEQEQIKKLTQGKSIPNFRPGDTVKVNLRIIEGANERIQAYQGVVIARANRSISSSFTVRKISHGKGIERKFMLYSPLISSIELIKKGVVRRAKLYYLRNLQGRKAKIREKIFSKDNQ.

It belongs to the bacterial ribosomal protein bL19 family.

In terms of biological role, this protein is located at the 30S-50S ribosomal subunit interface and may play a role in the structure and function of the aminoacyl-tRNA binding site. The polypeptide is Large ribosomal subunit protein bL19 (Orientia tsutsugamushi (strain Boryong) (Rickettsia tsutsugamushi)).